A 235-amino-acid polypeptide reads, in one-letter code: UPF0758 protein Swol_1642 (235 aa).

Residues 109 to 235 (IIKSPEDVQE…YCSLKARGLI (127 aa)) form the MPN domain. Positions 184, 186, and 197 each coordinate Zn(2+). The short motif at 184-197 (HNHPSGDPTPSQED) is the JAMM motif element.

Belongs to the UPF0758 family.

This is UPF0758 protein Swol_1642 from Syntrophomonas wolfei subsp. wolfei (strain DSM 2245B / Goettingen).